A 376-amino-acid polypeptide reads, in one-letter code: Arsenite methyltransferase (376 aa).

A phosphoserine mark is found at Ser47 and Ser336. Over residues 354-363 the composition is skewed to basic and acidic residues; the sequence is SDKMKPRHAP. The tract at residues 354-376 is disordered; the sequence is SDKMKPRHAPEGTGGCCGKRKNC.

This sequence belongs to the methyltransferase superfamily. Arsenite methyltransferase family.

The protein localises to the cytoplasm. Its subcellular location is the cytosol. It catalyses the reaction arsenic triglutathione + [thioredoxin]-dithiol + S-adenosyl-L-methionine + 2 H2O = methylarsonous acid + [thioredoxin]-disulfide + 3 glutathione + S-adenosyl-L-homocysteine + H(+). The enzyme catalyses arsenic triglutathione + 2 [thioredoxin]-dithiol + 2 S-adenosyl-L-methionine + H2O = dimethylarsinous acid + 2 [thioredoxin]-disulfide + 3 glutathione + 2 S-adenosyl-L-homocysteine + 2 H(+). It carries out the reaction arsenic triglutathione + 3 [thioredoxin]-dithiol + 3 S-adenosyl-L-methionine = trimethylarsine + 3 [thioredoxin]-disulfide + 3 glutathione + 3 S-adenosyl-L-homocysteine + 3 H(+). Its function is as follows. Catalyzes the transfer of a methyl group from AdoMet to trivalent arsenicals producing methylated and dimethylated arsenicals. It methylates arsenite to form methylarsonate, Me-AsO(3)H(2), which is reduced by methylarsonate reductase to methylarsonite, Me-As(OH)2. Methylarsonite is also a substrate and it is converted into the much less toxic compound dimethylarsinate (cacodylate), Me(2)As(O)-OH. The chain is Arsenite methyltransferase (As3mt) from Mus musculus (Mouse).